An 806-amino-acid chain; its full sequence is Plasminogen (806 aa).

The signal sequence occupies residues 1 to 19; it reads MEYGKVIFLFLLFLKSGQG. Residues 20–98 form the PAN domain; the sequence is ESLENYIKTE…RDVVLFEKRI (79 aa). Intrachain disulfides connect C49-C73, C53-C61, C103-C181, C124-C164, C152-C176, C185-C262, C188-C316, C206-C245, C234-C257, C275-C352, C296-C335, C324-C347, C371-C448, C392-C431, C420-C443, C476-C555, C497-C538, C526-C550, C563-C681, C573-C581, and C603-C619. Kringle domains lie at 102 to 181, 184 to 262, 274 to 352, 370 to 448, and 475 to 555; these read DCKS…VPEC, ECMH…IPRC, QCLK…IPSC, ECYE…LEKC, and DCMY…IPQC. Positions 577 to 804 constitute a Peptidase S1 domain; that stretch reads IVGGCYAQPH…YISWIEDVMK (228 aa). Phosphoserine is present on S593. Active-site charge relay system residues include H618 and D661. S684 bears the Phosphoserine mark. 3 disulfides stabilise this stretch: C695/C762, C725/C741, and C752/C780. The Charge relay system role is filled by S756.

The protein belongs to the peptidase S1 family. Plasminogen subfamily. In terms of assembly, interacts with CSPG4 and AMOT. Interacts (via the Kringle domains) with HRG; the interaction tethers PLG to the cell surface and enhances its activation. Interacts (via Kringle 4 domain) with ADA; the interaction stimulates PLG activation when in complex with DPP4. Angiostatin: Interacts with ATP5F1A; the interaction inhibits most of the angiogenic effects of angiostatin. Post-translationally, in the presence of the inhibitor, the activation involves only cleavage after Arg-576, yielding two chains held together by two disulfide bonds. In the absence of the inhibitor, the activation involves additionally the removal of the activation peptide.

It localises to the secreted. It catalyses the reaction Preferential cleavage: Lys-|-Xaa &gt; Arg-|-Xaa, higher selectivity than trypsin. Converts fibrin into soluble products.. Its activity is regulated as follows. Converted into plasmin by plasminogen activators, both plasminogen and its activator being bound to fibrin. Activated with catalytic amounts of streptokinase. Functionally, plasmin dissolves the fibrin of blood clots and acts as a proteolytic factor in a variety of other processes including embryonic development, tissue remodeling, tumor invasion, and inflammation. In ovulation, weakens the walls of the Graafian follicle. It activates the urokinase-type plasminogen activator, collagenases and several complement zymogens, such as C1, C4 and C5. Cleavage of fibronectin and laminin leads to cell detachment and apoptosis. Also cleaves fibrin, thrombospondin and von Willebrand factor. Its role in tissue remodeling and tumor invasion may be modulated by CSPG4. Binds to cells. The chain is Plasminogen (PLG) from Notamacropus eugenii (Tammar wallaby).